Reading from the N-terminus, the 228-residue chain is Eukaryotic translation initiation factor 4E-2 (228 aa).

Cys130 and Cys134 are oxidised to a cystine.

The protein belongs to the eukaryotic initiation factor 4E family. In terms of assembly, eIF4F is a multi-subunit complex, the composition of which varies with external and internal environmental conditions. It is composed of at least eIF4A, eIF4E and eIF4G. eIF4E is also known to interact with other partners. In terms of tissue distribution, highly expressed in all somatic tissues.

Functionally, recognizes and binds the 7-methylguanosine-containing mRNA cap during an early step in the initiation of protein synthesis and facilitates ribosome binding by inducing the unwinding of the mRNAs secondary structures. All 5 eIF4E proteins bind monomethyl cap structures. Only ife-1, ife-2 and ife-5 bind trimethyl cap structures which result from trans-splicing. Translation of trimethyl cap structure mRNAs may be regulated by intracellular redox state; disulfide bonds change the width and depth of the cap-binding cavity determining selectivity to mRNA caps. Probably by regulating mRNA translation in somatic cells, negatively regulates lifespan independently of daf-2/insulin and let-363/TOR pathways. Negatively regulates resistance to oxidative stress. May play a role in embryonic development. The sequence is that of Eukaryotic translation initiation factor 4E-2 (ife-2) from Caenorhabditis elegans.